Here is a 702-residue protein sequence, read N- to C-terminus: Polyribonucleotide nucleotidyltransferase (702 aa).

Positions 486 and 492 each coordinate Mg(2+). Positions P553–I612 constitute a KH domain. Residues D622–K690 enclose the S1 motif domain.

Belongs to the polyribonucleotide nucleotidyltransferase family. Component of the RNA degradosome, which is a multiprotein complex involved in RNA processing and mRNA degradation. It depends on Mg(2+) as a cofactor.

The protein resides in the cytoplasm. The catalysed reaction is RNA(n+1) + phosphate = RNA(n) + a ribonucleoside 5'-diphosphate. Its function is as follows. Involved in mRNA degradation. Catalyzes the phosphorolysis of single-stranded polyribonucleotides processively in the 3'- to 5'-direction. The sequence is that of Polyribonucleotide nucleotidyltransferase from Marinomonas sp. (strain MWYL1).